The primary structure comprises 601 residues: Elongation factor 4 (601 aa).

The region spanning 7–189 (DTIRNFSIVA…AIVAKLPPPK (183 aa)) is the tr-type G domain. GTP contacts are provided by residues 19 to 24 (DHGKST) and 136 to 139 (NKID).

It belongs to the TRAFAC class translation factor GTPase superfamily. Classic translation factor GTPase family. LepA subfamily.

The protein resides in the cell inner membrane. The catalysed reaction is GTP + H2O = GDP + phosphate + H(+). Functionally, required for accurate and efficient protein synthesis under certain stress conditions. May act as a fidelity factor of the translation reaction, by catalyzing a one-codon backward translocation of tRNAs on improperly translocated ribosomes. Back-translocation proceeds from a post-translocation (POST) complex to a pre-translocation (PRE) complex, thus giving elongation factor G a second chance to translocate the tRNAs correctly. Binds to ribosomes in a GTP-dependent manner. The protein is Elongation factor 4 of Methylobacterium sp. (strain 4-46).